Reading from the N-terminus, the 809-residue chain is WD repeat protein iqw1 (809 aa).

5 WD repeats span residues 43 to 82 (GHTG…KPRH), 87 to 128 (GHVQ…EGGM), 141 to 180 (CALD…VCNQ), 193 to 233 (PYRI…KSFR), and 241 to 295 (SPEK…LFHV). Residues 599 to 644 (SMYTGHSDLNDDDDDYQDEESYSYASDDDDESDEDSDEGPTLLSLR) form a disordered region. The segment covering 608-636 (NDDDDDYQDEESYSYASDDDDESDEDSDE) has biased composition (acidic residues). WD repeat units follow at residues 668–708 (CNVE…ILAI) and 711–750 (GDSE…PSGC).

In terms of assembly, interacts with ddb1.

It localises to the cytoplasm. Ligand-dependent coactivator of nuclear receptors that may function as a substrate receptor for CUL4-DDB1 E3 ubiquitin-protein ligase complex. The chain is WD repeat protein iqw1 (iqw1) from Schizosaccharomyces pombe (strain 972 / ATCC 24843) (Fission yeast).